The primary structure comprises 381 residues: Creatine kinase M-type (381 aa).

In terms of domain architecture, Phosphagen kinase N-terminal spans 11-98 (KLNFKAEEEY…FDPIIQDRHG (88 aa)). Positions 125–367 (YVLSSRVRTG…KLMVEMEKKL (243 aa)) constitute a Phosphagen kinase C-terminal domain. 128–132 (SSRVR) is a binding site for ATP. S164 is subject to Phosphoserine. A Phosphothreonine modification is found at T166. The residue at position 178 (S178) is a Phosphoserine. At T180 the chain carries Phosphothreonine. ATP is bound at residue H191. Phosphoserine is present on S199. Residues R236 and R292 each contribute to the ATP site. Phosphothreonine occurs at positions 313 and 322. Residues 320 to 325 (RGTGGV) and D335 contribute to the ATP site. Residue S372 is modified to Phosphoserine.

The protein belongs to the ATP:guanido phosphotransferase family. Dimer of identical or non-identical chains, which can be either B (brain type) or M (muscle type). With MM being the major form in skeletal muscle and myocardium, MB existing in myocardium, and BB existing in many tissues, especially brain.

The protein resides in the cytoplasm. It carries out the reaction creatine + ATP = N-phosphocreatine + ADP + H(+). Functionally, reversibly catalyzes the transfer of phosphate between ATP and various phosphogens (e.g. creatine phosphate). Creatine kinase isoenzymes play a central role in energy transduction in tissues with large, fluctuating energy demands, such as skeletal muscle, heart, brain and spermatozoa. The protein is Creatine kinase M-type (CKM) of Bos taurus (Bovine).